We begin with the raw amino-acid sequence, 123 residues long: Putative iron-sulfur cluster insertion protein ErpA (123 aa).

Iron-sulfur cluster-binding residues include Cys-51, Cys-115, and Cys-117.

This sequence belongs to the HesB/IscA family. Homodimer. The cofactor is iron-sulfur cluster.

In terms of biological role, required for insertion of 4Fe-4S clusters. The protein is Putative iron-sulfur cluster insertion protein ErpA of Burkholderia ambifaria (strain ATCC BAA-244 / DSM 16087 / CCUG 44356 / LMG 19182 / AMMD) (Burkholderia cepacia (strain AMMD)).